The sequence spans 455 residues: Tubby-like F-box protein 1 (455 aa).

Residues 54–112 (ETPWANLPPELLRDVIKRLEESESVWPARRHVVACASVCRSWRDMCKEIVQSPELSGKI) enclose the F-box domain. The disordered stretch occupies residues 386 to 414 (QPQPQPQPQPQPQPLTQPQPSGQTDGPDK). Over residues 388–402 (QPQPQPQPQPQPLTQ) the composition is skewed to pro residues.

The protein belongs to the TUB family. As to expression, ubiquitous.

The polypeptide is Tubby-like F-box protein 1 (Arabidopsis thaliana (Mouse-ear cress)).